The following is a 480-amino-acid chain: Adenylosuccinate synthetase, chloroplastic (480 aa).

A chloroplast-targeting transit peptide spans 1 to 54 (MATARVMVADRARAFGGTTATRARRDDQGRRVTIARGIPSRARVVVARASERAY). Residues 69–75 (GDEGKGK) and 97–99 (GHT) contribute to the GTP site. The active-site Proton acceptor is Asp-70. Mg(2+) contacts are provided by Asp-70 and Gly-97. Residues 70–73 (DEGK), 95–98 (NAGH), Thr-187, Arg-201, Asn-278, Thr-293, and Arg-357 each bind IMP. His-98 acts as the Proton donor in catalysis. A substrate-binding site is contributed by 353 to 359 (TTTGRPR). GTP-binding positions include Arg-359, 385 to 387 (KLD), and 468 to 470 (GVG).

The protein belongs to the adenylosuccinate synthetase family. Homodimer. Mg(2+) is required as a cofactor.

It is found in the plastid. Its subcellular location is the chloroplast. The catalysed reaction is IMP + L-aspartate + GTP = N(6)-(1,2-dicarboxyethyl)-AMP + GDP + phosphate + 2 H(+). It functions in the pathway purine metabolism; AMP biosynthesis via de novo pathway; AMP from IMP: step 1/2. In terms of biological role, plays an important role in the de novo pathway and in the salvage pathway of purine nucleotide biosynthesis. Catalyzes the first committed step in the biosynthesis of AMP from IMP. In Ostreococcus tauri, this protein is Adenylosuccinate synthetase, chloroplastic.